Reading from the N-terminus, the 931-residue chain is Short transient receptor potential channel 6 (931 aa).

Residues 1-24 (MNQSPAAFGPRRGGSPAVVAGAGA) form a disordered region. The Cytoplasmic segment spans residues 1 to 406 (MNQSPAAFGP…GLRQQTMAVK (406 aa)). A compositionally biased stretch (low complexity) spans 13 to 24 (GGSPAVVAGAGA). 3 ANK repeats span residues 131 to 160 (MGQN…LSRV), 162 to 188 (DALL…FAEG), and 217 to 246 (HDVT…RIER). Residues 407 to 427 (FLVVLAVAVGLPFLALVYWFA) form a helical membrane-spanning segment. At 428-438 (PCSKMGKIMRG) the chain is on the extracellular side. A helical membrane pass occupies residues 439 to 459 (PFMKFVAHAASFTIFLGLLVM). Residues 460 to 487 (NAADRFEGTKILPNETSTDHAKQLFRMK) are Cytoplasmic-facing. The chain crosses the membrane as a helical span at residues 488 to 508 (TSCFSWMEMLIISWVIGMIWA). Over 509–521 (ECKEIWTQGPKEY) the chain is Extracellular. Residues 522–542 (LFELWNMLDFGMLAIFAASFI) form a helical membrane-spanning segment. Topologically, residues 543 to 592 (ARFMAFWHASKAQSIIDANDTLKDLTKVTLGDNVKYYNLARIKWDPSDPQ) are cytoplasmic. A helical membrane pass occupies residues 593 to 613 (IISEGLYAIAVVLSFSRIAYI). At 614-636 (LPANESFGPLQISLGRTVKDIFK) the chain is on the extracellular side. Asn617 carries an N-linked (GlcNAc...) asparagine glycan. One copy of the ANK 4 repeat lies at 618–647 (ESFGPLQISLGRTVKDIFKFMVIFIMVFVA). The chain crosses the membrane as a helical span at residues 637–657 (FMVIFIMVFVAFMIGMFNLYS). Topologically, residues 658-674 (YYIGAKQNEAFTTVEES) are cytoplasmic. The helical transmembrane segment at 675 to 695 (FKTLFWAIFGLSEVKSVVINY) threads the bilayer. Topologically, residues 696 to 706 (NHKFIENIGYV) are extracellular. Residues 707–727 (LYGVYNVTMVIVLLNMLIAMI) form a helical membrane-spanning segment. Topologically, residues 728-931 (NSSFQEIEDD…MEPNQEESNR (204 aa)) are cytoplasmic. Phosphoserine is present on Ser815.

This sequence belongs to the transient receptor (TC 1.A.4) family. STrpC subfamily. TRPC6 sub-subfamily. Homodimer; forms channel complex. Interacts with MX1 and RNF24. In terms of processing, phosphorylated by FYN, leading to an increase of TRPC6 channel activity.

The protein resides in the cell membrane. The catalysed reaction is Ca(2+)(in) = Ca(2+)(out). Thought to form a receptor-activated non-selective calcium permeant cation channel. Probably is operated by a phosphatidylinositol second messenger system activated by receptor tyrosine kinases or G-protein coupled receptors. Activated by diacylglycerol (DAG) in a membrane-delimited fashion, independently of protein kinase C. Seems not to be activated by intracellular calcium store depletion. This chain is Short transient receptor potential channel 6, found in Bos taurus (Bovine).